Consider the following 692-residue polypeptide: Elongation factor G (692 aa).

The 275-residue stretch at 8–282 folds into the tr-type G domain; sequence ENTRNIGIMA…AVIDYLPSPL (275 aa). GTP-binding positions include 17-24, 81-85, and 135-138; these read AHIDAGKT, DTPGH, and NKMD.

Belongs to the TRAFAC class translation factor GTPase superfamily. Classic translation factor GTPase family. EF-G/EF-2 subfamily.

The protein resides in the cytoplasm. Catalyzes the GTP-dependent ribosomal translocation step during translation elongation. During this step, the ribosome changes from the pre-translocational (PRE) to the post-translocational (POST) state as the newly formed A-site-bound peptidyl-tRNA and P-site-bound deacylated tRNA move to the P and E sites, respectively. Catalyzes the coordinated movement of the two tRNA molecules, the mRNA and conformational changes in the ribosome. In Bacillus cereus (strain G9842), this protein is Elongation factor G.